The following is a 311-amino-acid chain: Mitoferrin (311 aa).

Solcar repeat units lie at residues 15–102 (HSIP…MKSF), 111–195 (EHTL…WQQV), and 202–302 (YDPK…FKFM). The next 6 membrane-spanning stretches (helical) occupy residues 17–36 (IPVH…CVMF), 77–96 (GVNA…FTVY), 112–132 (HTLA…AVMN), 170–189 (SYTT…FMGY), 204–223 (PKSH…AVTT), and 277–296 (GLQA…WSVY).

This sequence belongs to the mitochondrial carrier (TC 2.A.29) family.

Its subcellular location is the mitochondrion inner membrane. In terms of biological role, mitochondrial iron transporter that mediates iron uptake. Probably required for heme synthesis of hemoproteins and Fe-S cluster assembly. The polypeptide is Mitoferrin (Caenorhabditis briggsae).